The sequence spans 256 residues: MKLKPLILSNWKLNGNCLLVKKILLKLNEKLKNKNNLKVVIAPPVIYLSEFKKYVLKKNIFLAAQNVDVNLTGSFTGEISPIMLYEFGVKYVIIGHSERRLYHNESIEDVTKKFLILKKFNLIPVLCIGETKKNKDDKCIENEIVKQIDFILKKIGIEGFINTVIAYEPTWAIGKKDSASPKYIQKIHKFIRNYLSKYDNDISKKIILQYGGSVNSKNVKKIISQKDVNGVLLGRSSTNIEEFLYILDIIEKTKKS.

10–12 contacts substrate; the sequence is NWK. Residue His-96 is the Electrophile of the active site. Glu-168 (proton acceptor) is an active-site residue. Substrate-binding residues include Gly-174 and Ser-213.

It belongs to the triosephosphate isomerase family. In terms of assembly, homodimer.

It localises to the cytoplasm. The catalysed reaction is D-glyceraldehyde 3-phosphate = dihydroxyacetone phosphate. The protein operates within carbohydrate biosynthesis; gluconeogenesis. Its pathway is carbohydrate degradation; glycolysis; D-glyceraldehyde 3-phosphate from glycerone phosphate: step 1/1. Involved in the gluconeogenesis. Catalyzes stereospecifically the conversion of dihydroxyacetone phosphate (DHAP) to D-glyceraldehyde-3-phosphate (G3P). This Wigglesworthia glossinidia brevipalpis protein is Triosephosphate isomerase.